A 126-amino-acid polypeptide reads, in one-letter code: Cystatin-like cysteine protease inhibitor EPIC1 (126 aa).

An N-terminal signal peptide occupies residues Met1–Ala21. A glycan (N-linked (GlcNAc...) asparagine) is linked at Asn46. Residues Gln69–Gly73 carry the Secondary area of contact motif.

It belongs to the cystatin family. As to quaternary structure, interacts with the host papain-like cysteine protease RCR3. Interacts with the host papain-like cysteine protease C14.

It is found in the secreted. Secreted effector that interacts with and inhibits the pathogenesis-related papain-like cysteine proteases C14 and RCR3 of host plants. Inhibition of host proteases by a pathogen extracellular protease inhibitor forms a specific type of defense-counterdefense mechanism between plants and microbial pathogens. This chain is Cystatin-like cysteine protease inhibitor EPIC1, found in Phytophthora infestans (Potato late blight agent).